Here is a 941-residue protein sequence, read N- to C-terminus: Glycine dehydrogenase (decarboxylating) (941 aa).

Lysine 692 carries the post-translational modification N6-(pyridoxal phosphate)lysine.

It belongs to the GcvP family. The glycine cleavage system is composed of four proteins: P, T, L and H. Pyridoxal 5'-phosphate serves as cofactor.

It catalyses the reaction N(6)-[(R)-lipoyl]-L-lysyl-[glycine-cleavage complex H protein] + glycine + H(+) = N(6)-[(R)-S(8)-aminomethyldihydrolipoyl]-L-lysyl-[glycine-cleavage complex H protein] + CO2. In terms of biological role, the glycine cleavage system catalyzes the degradation of glycine. The P protein binds the alpha-amino group of glycine through its pyridoxal phosphate cofactor; CO(2) is released and the remaining methylamine moiety is then transferred to the lipoamide cofactor of the H protein. In Mycobacterium avium (strain 104), this protein is Glycine dehydrogenase (decarboxylating).